We begin with the raw amino-acid sequence, 418 residues long: Tyrosine--tRNA ligase (418 aa).

Tyr-34 is an L-tyrosine binding site. The 'HIGH' region motif lies at 39–48 (PTADSLHLGH). L-tyrosine is bound by residues Tyr-169 and Gln-173. The 'KMSKS' region signature appears at 229–233 (KFGKS). Lys-232 lines the ATP pocket. The S4 RNA-binding domain occupies 352 to 418 (LNLVDMLVTA…GKKKYAVLTY (67 aa)).

It belongs to the class-I aminoacyl-tRNA synthetase family. TyrS type 1 subfamily. Homodimer.

The protein localises to the cytoplasm. It carries out the reaction tRNA(Tyr) + L-tyrosine + ATP = L-tyrosyl-tRNA(Tyr) + AMP + diphosphate + H(+). Its function is as follows. Catalyzes the attachment of tyrosine to tRNA(Tyr) in a two-step reaction: tyrosine is first activated by ATP to form Tyr-AMP and then transferred to the acceptor end of tRNA(Tyr). The chain is Tyrosine--tRNA ligase from Streptococcus pyogenes serotype M18 (strain MGAS8232).